A 213-amino-acid polypeptide reads, in one-letter code: Putative manganese efflux pump MntP (213 aa).

Transmembrane regions (helical) follow at residues 3-23 (ILSI…VSVA), 36-56 (ALKV…IGWG), 67-87 (AFDH…MIFE), 130-150 (LAIA…FLGI), 152-172 (IVQT…LGVI), and 187-207 (IVGG…HTGI).

This sequence belongs to the MntP (TC 9.B.29) family.

It localises to the cell membrane. Functionally, probably functions as a manganese efflux pump. The polypeptide is Putative manganese efflux pump MntP (Clostridium perfringens (strain ATCC 13124 / DSM 756 / JCM 1290 / NCIMB 6125 / NCTC 8237 / Type A)).